The primary structure comprises 520 residues: GMP synthase [glutamine-hydrolyzing] (520 aa).

Residues 13 to 205 (KIIVLDYGSQ…ALNICKAKGD (193 aa)) form the Glutamine amidotransferase type-1 domain. The active-site Nucleophile is cysteine 90. Residues histidine 179 and glutamate 181 contribute to the active site. The GMPS ATP-PPase domain maps to 206–395 (WSMDNFIDMQ…LGMPDHIVWR (190 aa)). 233 to 239 (SGGVDSS) serves as a coordination point for ATP.

In terms of assembly, homodimer.

It catalyses the reaction XMP + L-glutamine + ATP + H2O = GMP + L-glutamate + AMP + diphosphate + 2 H(+). The protein operates within purine metabolism; GMP biosynthesis; GMP from XMP (L-Gln route): step 1/1. Catalyzes the synthesis of GMP from XMP. This Streptococcus pneumoniae (strain CGSP14) protein is GMP synthase [glutamine-hydrolyzing].